Reading from the N-terminus, the 271-residue chain is 3-methyl-2-oxobutanoate hydroxymethyltransferase (271 aa).

Positions 49 and 88 each coordinate Mg(2+). Residues 49 to 50 (DS), aspartate 88, and lysine 118 contribute to the 3-methyl-2-oxobutanoate site. A Mg(2+)-binding site is contributed by glutamate 120. Glutamate 187 functions as the Proton acceptor in the catalytic mechanism.

The protein belongs to the PanB family. In terms of assembly, homodecamer; pentamer of dimers. It depends on Mg(2+) as a cofactor.

It is found in the cytoplasm. The enzyme catalyses 3-methyl-2-oxobutanoate + (6R)-5,10-methylene-5,6,7,8-tetrahydrofolate + H2O = 2-dehydropantoate + (6S)-5,6,7,8-tetrahydrofolate. It functions in the pathway cofactor biosynthesis; (R)-pantothenate biosynthesis; (R)-pantoate from 3-methyl-2-oxobutanoate: step 1/2. Catalyzes the reversible reaction in which hydroxymethyl group from 5,10-methylenetetrahydrofolate is transferred onto alpha-ketoisovalerate to form ketopantoate. The polypeptide is 3-methyl-2-oxobutanoate hydroxymethyltransferase (Bartonella tribocorum (strain CIP 105476 / IBS 506)).